We begin with the raw amino-acid sequence, 82 residues long: Small ribosomal subunit protein bS18 (82 aa).

A disordered region spans residues 1-25; that stretch reads MADTSSSQARRPFHRRRKTCPFSGA.

It belongs to the bacterial ribosomal protein bS18 family. As to quaternary structure, part of the 30S ribosomal subunit. Forms a tight heterodimer with protein bS6.

Its function is as follows. Binds as a heterodimer with protein bS6 to the central domain of the 16S rRNA, where it helps stabilize the platform of the 30S subunit. This chain is Small ribosomal subunit protein bS18, found in Agrobacterium fabrum (strain C58 / ATCC 33970) (Agrobacterium tumefaciens (strain C58)).